Consider the following 200-residue polypeptide: Late protein I196L (200 aa).

2 tandem repeats follow at residues 28-48 and 49-69. Residues 70 to 91 form a 3; approximate repeat; that stretch reads SNYLTSAISTNISDKEEDTPFS.

This sequence belongs to the asfivirus I196L family.

This is Late protein I196L from African swine fever virus (isolate Tick/South Africa/Pretoriuskop Pr4/1996) (ASFV).